Here is a 93-residue protein sequence, read N- to C-terminus: Small ribosomal subunit protein uS19 (93 aa).

This sequence belongs to the universal ribosomal protein uS19 family.

Protein S19 forms a complex with S13 that binds strongly to the 16S ribosomal RNA. The protein is Small ribosomal subunit protein uS19 of Microcystis aeruginosa (strain NIES-843 / IAM M-2473).